A 349-amino-acid polypeptide reads, in one-letter code: Thiamine thiazole synthase, chloroplastic (349 aa).

Residues 1–45 (MAAIASTLSLSSTKPQRLFDSSFHGSAISAAPISIGLKPRSFSVR) constitute a chloroplast transit peptide. Substrate contacts are provided by residues A94, 114-115 (EQ), G122, and A187. C216 is modified (2,3-didehydroalanine (Cys)). Residues D218, H233, M285, and 295–297 (RMG) contribute to the substrate site.

This sequence belongs to the THI4 family. Homooctamer. Interacts with RBCX1 and RBCX1. Interacts with CPK33. The cofactor is Fe cation. During the catalytic reaction, a sulfide is transferred from Cys-216 to a reaction intermediate, generating a dehydroalanine residue. Not phosphorylated in vitro by CPK33. As to expression, expressed at high levels in chloroplast-containing parenchymatic cells of leaves, inflorescence shoots and flowers, and at lower levels in the vascular system. In young plants, detected in roots and shoots including cotyledons, leaves and hypocotyls. Also observed in apical meristematic regions, siliques and embryos. Low expression in roots, limited to the vascular tissue. Broadly expressed in roots, cotyledons, leaves, hypocotyls, inflorescences, siliques, and strongly in guard cells.

The protein localises to the plastid. It is found in the chloroplast. It localises to the mitochondrion. The protein resides in the cell membrane. It catalyses the reaction [ADP-thiazole synthase]-L-cysteine + glycine + NAD(+) = [ADP-thiazole synthase]-dehydroalanine + ADP-5-ethyl-4-methylthiazole-2-carboxylate + nicotinamide + 3 H2O + 2 H(+). Involved in biosynthesis of the thiamine precursor thiazole. Catalyzes the conversion of NAD and glycine to adenosine diphosphate 5-(2-hydroxyethyl)-4-methylthiazole-2-carboxylic acid (ADT), an adenylated thiazole intermediate. The reaction includes an iron-dependent sulfide transfer from a conserved cysteine residue of the protein to a thiazole intermediate. The enzyme can only undergo a single turnover, which suggests it is a suicide enzyme. May have additional roles in adaptation to various stress conditions and in DNA damage tolerance. Acts as a positive regulator for the abscisic acid-induced activation of slow type anion channels during stomatal closure by repressing CPK33 kinase activity. The polypeptide is Thiamine thiazole synthase, chloroplastic (Arabidopsis thaliana (Mouse-ear cress)).